A 379-amino-acid polypeptide reads, in one-letter code: Flagellin A (379 aa).

2 coiled-coil regions span residues 104–129 (NSASERQALNEESVALQDELNRIAET) and 314–341 (QNRLSHSISNLSNIQENVEASKSRIKDT).

It belongs to the bacterial flagellin family. As to quaternary structure, heteromer of multiple flagellin subunits including FlaA, FlaB, FlaC, FlaD and FlaE.

The protein localises to the secreted. The protein resides in the bacterial flagellum. In terms of biological role, flagellin is the subunit protein which polymerizes to form the filaments of bacterial flagella. FlaA is required to form a core or scaffold into which the other flagellins are inserted to provide structural integrity. Essential for flagellar synthesis and motility; important for full virulence. The sequence is that of Flagellin A (flaA) from Vibrio cholerae serotype O1 (strain ATCC 39541 / Classical Ogawa 395 / O395).